A 105-amino-acid chain; its full sequence is MFVVVETGGKQYKVSVGSMVNVEKLKANVGDEVVLDKVLLVGKEDEVIIGQPYVEGAKVIAKVVRQDKYPKVIVFKFKRKKHYRRKYGHRQPYTQLSIKEIVLPH.

Belongs to the bacterial ribosomal protein bL21 family. As to quaternary structure, part of the 50S ribosomal subunit. Contacts protein L20.

Functionally, this protein binds to 23S rRNA in the presence of protein L20. This chain is Large ribosomal subunit protein bL21, found in Dictyoglomus turgidum (strain DSM 6724 / Z-1310).